Consider the following 994-residue polypeptide: MSDENNNGRNSAPGGRQPLTLKPRAAGSVSSGTVKQSFSHGRTKTVVVETKRARTHAPAGGNLAAPSAAERRVFEPQKPAGPAQAPRAPQGAGDGLSAEERAARQRAIELARQQEADRRAREERARAEAEAARAAQQKAAQAAAEPPAAPPPAPAAPPAAAAPAAPAAEAAPAPKPAPSPRPVPPSAPAPQAARPAAEAPPRQAGAGQTRTYQPSPDRRDDRPSTTTYRPERPSNRFDTSTFNQRAPRRDDDRGPRPPRRDDDRGPRRDDRPQGARPEGGGTVRYSALAPRPAPGGPRGPGGPRGPGGPRIGAAAPPATPEIQRAARQAPRPGMGVDRRPDEDDRRRDPGKAISRAKGAPNRREGRLTIQAVAGDADGAERMRSLASVRRAREREREKRKGGAQEQARVAREVVIPDVITVGELANRMATRGVEVIKFLMRQGVMLKINDVIDNDTAELVATEFGHTVKRVSEADVEEGFIGAEDVDDHLLPRPPVVAVMGHVDHGKTSLLDALRSTDVVSGEHGGITQHIGAYQVRLADGQRVTFLDTPGHAAFSAMRMRGANVTDIVILVVAADDGVMPQTVEAIQHAKAAGAPIIVAINKIDKPDADPTRVINELLQHEIVVESLGGETQAVEVSATQKMGLDDLIENILLQAEVLDLKANPDRTADGSVIEAKLDKGRGAVATVLVKRGTLKRGDIVVAGSSWGRVRALLNERGEQLQEATPSTPVEILGLDGTPDPGEPFAVVENEARARELTEYRQRVKREKAGAPVASASLADMMAKLADKKVSELPVIIKADVQGSAEAIVGSLDKLATDEVRARIILSGAGAINESDVLLAKGAGAPILGFNVRASKQARDLAEREGVEIRYYAIIYDLIDDIKGVLSGMLAPIQRETFLGNAEVLQAFDITKVGRVAGCRVTEGVVRKGARVRIVREDVVILELGVLKTLKRFKDEVNEVQAGQECGMAFEGFQDIKAGDVIECFNLEEVKRSL.

Composition is skewed to polar residues over residues 1–10 and 28–40; these read MSDENNNGRN and SVSSGTVKQSFSH. The tract at residues 1-405 is disordered; it reads MSDENNNGRN…REKRKGGAQE (405 aa). Over residues 76–91 the composition is skewed to low complexity; sequence PQKPAGPAQAPRAPQG. Over residues 98 to 131 the composition is skewed to basic and acidic residues; it reads AEERAARQRAIELARQQEADRRAREERARAEAEA. The segment covering 132–146 has biased composition (low complexity); the sequence is ARAAQQKAAQAAAEP. Residues 147–157 show a composition bias toward pro residues; the sequence is PAAPPPAPAAP. The span at 158–172 shows a compositional bias: low complexity; sequence PAAAAPAAPAAEAAP. The span at 173–188 shows a compositional bias: pro residues; sequence APKPAPSPRPVPPSAP. Residues 189–204 are compositionally biased toward low complexity; that stretch reads APQAARPAAEAPPRQA. Basic and acidic residues-rich tracts occupy residues 216–235 and 247–273; these read PDRRDDRPSTTTYRPERPSN and PRRDDDRGPRPPRRDDDRGPRRDDRPQ. Positions 298-310 are enriched in gly residues; it reads RGPGGPRGPGGPR. Composition is skewed to basic and acidic residues over residues 336–350 and 390–402; these read VDRRPDEDDRRRDPG and RAREREREKRKGG. The tr-type G domain occupies 492-662; sequence PRPPVVAVMG…LLQAEVLDLK (171 aa). The G1 stretch occupies residues 501 to 508; sequence GHVDHGKT. GTP is bound at residue 501–508; it reads GHVDHGKT. Positions 526–530 are G2; sequence GITQH. The G3 stretch occupies residues 548–551; that stretch reads DTPG. GTP contacts are provided by residues 548-552 and 602-605; these read DTPGH and NKID. Residues 602 to 605 are G4; sequence NKID. The G5 stretch occupies residues 638–640; it reads SAT.

This sequence belongs to the TRAFAC class translation factor GTPase superfamily. Classic translation factor GTPase family. IF-2 subfamily.

The protein resides in the cytoplasm. Functionally, one of the essential components for the initiation of protein synthesis. Protects formylmethionyl-tRNA from spontaneous hydrolysis and promotes its binding to the 30S ribosomal subunits. Also involved in the hydrolysis of GTP during the formation of the 70S ribosomal complex. The chain is Translation initiation factor IF-2 from Phenylobacterium zucineum (strain HLK1).